The primary structure comprises 150 residues: Phosphoribosyl-AMP cyclohydrolase (150 aa).

Mg(2+) is bound at residue D92. C93 serves as a coordination point for Zn(2+). Mg(2+) is bound by residues D94 and D96. Zn(2+)-binding residues include C111 and C118.

The protein belongs to the PRA-CH family. Homodimer. It depends on Mg(2+) as a cofactor. The cofactor is Zn(2+).

The protein resides in the cytoplasm. It carries out the reaction 1-(5-phospho-beta-D-ribosyl)-5'-AMP + H2O = 1-(5-phospho-beta-D-ribosyl)-5-[(5-phospho-beta-D-ribosylamino)methylideneamino]imidazole-4-carboxamide. It participates in amino-acid biosynthesis; L-histidine biosynthesis; L-histidine from 5-phospho-alpha-D-ribose 1-diphosphate: step 3/9. In terms of biological role, catalyzes the hydrolysis of the adenine ring of phosphoribosyl-AMP. In Agrobacterium fabrum (strain C58 / ATCC 33970) (Agrobacterium tumefaciens (strain C58)), this protein is Phosphoribosyl-AMP cyclohydrolase.